The primary structure comprises 184 residues: Probable RNA 2'-phosphotransferase (184 aa).

The protein belongs to the KptA/TPT1 family.

Its function is as follows. Removes the 2'-phosphate from RNA via an intermediate in which the phosphate is ADP-ribosylated by NAD followed by a presumed transesterification to release the RNA and generate ADP-ribose 1''-2''-cyclic phosphate (APPR&gt;P). May function as an ADP-ribosylase. This is Probable RNA 2'-phosphotransferase from Escherichia coli O139:H28 (strain E24377A / ETEC).